The chain runs to 349 residues: N-acetyl-gamma-glutamyl-phosphate reductase (349 aa).

C149 is an active-site residue.

The protein belongs to the NAGSA dehydrogenase family. Type 1 subfamily.

It localises to the cytoplasm. It catalyses the reaction N-acetyl-L-glutamate 5-semialdehyde + phosphate + NADP(+) = N-acetyl-L-glutamyl 5-phosphate + NADPH + H(+). It functions in the pathway amino-acid biosynthesis; L-arginine biosynthesis; N(2)-acetyl-L-ornithine from L-glutamate: step 3/4. In terms of biological role, catalyzes the NADPH-dependent reduction of N-acetyl-5-glutamyl phosphate to yield N-acetyl-L-glutamate 5-semialdehyde. The polypeptide is N-acetyl-gamma-glutamyl-phosphate reductase (Acinetobacter baumannii (strain AB307-0294)).